Here is a 151-residue protein sequence, read N- to C-terminus: Large ribosomal subunit protein uL15 (151 aa).

A disordered region spans residues 1–58 (MTSISLDSLKPNKGARKRKTRKGRGIAAGQGASCGFGMRGQKSRSGRPTRPGFEGGQM). Residues 13-24 (KGARKRKTRKGR) are compositionally biased toward basic residues. Positions 26-38 (IAAGQGASCGFGM) are enriched in gly residues.

This sequence belongs to the universal ribosomal protein uL15 family. As to quaternary structure, part of the 50S ribosomal subunit.

In terms of biological role, binds to the 23S rRNA. This Prochlorococcus marinus (strain SARG / CCMP1375 / SS120) protein is Large ribosomal subunit protein uL15.